A 179-amino-acid polypeptide reads, in one-letter code: Large ribosomal subunit protein uL5 (179 aa).

This sequence belongs to the universal ribosomal protein uL5 family. As to quaternary structure, part of the 50S ribosomal subunit; part of the 5S rRNA/L5/L18/L25 subcomplex. Contacts the 5S rRNA and the P site tRNA. Forms a bridge to the 30S subunit in the 70S ribosome.

In terms of biological role, this is one of the proteins that bind and probably mediate the attachment of the 5S RNA into the large ribosomal subunit, where it forms part of the central protuberance. In the 70S ribosome it contacts protein S13 of the 30S subunit (bridge B1b), connecting the 2 subunits; this bridge is implicated in subunit movement. Contacts the P site tRNA; the 5S rRNA and some of its associated proteins might help stabilize positioning of ribosome-bound tRNAs. This Parasynechococcus marenigrum (strain WH8102) protein is Large ribosomal subunit protein uL5.